We begin with the raw amino-acid sequence, 238 residues long: Uracil-DNA glycosylase (238 aa).

Catalysis depends on Asp81, which acts as the Proton acceptor.

This sequence belongs to the uracil-DNA glycosylase (UDG) superfamily. UNG family.

It localises to the cytoplasm. It catalyses the reaction Hydrolyzes single-stranded DNA or mismatched double-stranded DNA and polynucleotides, releasing free uracil.. Functionally, excises uracil residues from the DNA which can arise as a result of misincorporation of dUMP residues by DNA polymerase or due to deamination of cytosine. In Corynebacterium efficiens (strain DSM 44549 / YS-314 / AJ 12310 / JCM 11189 / NBRC 100395), this protein is Uracil-DNA glycosylase.